A 203-amino-acid chain; its full sequence is uncharacterized protein (203 aa).

The region spanning 90–188 (EKRQHVRVQP…YENIIGRYVM (99 aa)) is the PilZ domain.

It to A.aeolicus aq_820 and aq_1583.

This is an uncharacterized protein from Aquifex aeolicus (strain VF5).